The sequence spans 573 residues: 2-succinyl-5-enolpyruvyl-6-hydroxy-3-cyclohexene-1-carboxylate synthase (573 aa).

It belongs to the TPP enzyme family. MenD subfamily. In terms of assembly, homodimer. Mg(2+) is required as a cofactor. It depends on Mn(2+) as a cofactor. The cofactor is thiamine diphosphate.

The enzyme catalyses isochorismate + 2-oxoglutarate + H(+) = 5-enolpyruvoyl-6-hydroxy-2-succinyl-cyclohex-3-ene-1-carboxylate + CO2. The protein operates within quinol/quinone metabolism; 1,4-dihydroxy-2-naphthoate biosynthesis; 1,4-dihydroxy-2-naphthoate from chorismate: step 2/7. It participates in quinol/quinone metabolism; menaquinone biosynthesis. In terms of biological role, catalyzes the thiamine diphosphate-dependent decarboxylation of 2-oxoglutarate and the subsequent addition of the resulting succinic semialdehyde-thiamine pyrophosphate anion to isochorismate to yield 2-succinyl-5-enolpyruvyl-6-hydroxy-3-cyclohexene-1-carboxylate (SEPHCHC). This is 2-succinyl-5-enolpyruvyl-6-hydroxy-3-cyclohexene-1-carboxylate synthase from Shewanella baltica (strain OS195).